A 309-amino-acid chain; its full sequence is MVGFKATDVPPTATVKFLGAGTAACIADLITFPLDTAKVRLQIQGESQGPVRATASAQYRGVMGTILTMVRTEGPRSLYNGLVAGLQRQMSFASVRIGLYDSVKQFYTKGSEHASIGSRLLAGSTTGALAVAVAQPTDVVKVRFQAQARAGGGRRYQSTVNAYKTIAREEGFRGLWKGTSPNVARNAIVNCAELVTYDLIKDALLKANLMTDDLPCHFTSAFGAGFCTTVIASPVDVVKTRYMNSALGQYSSAGHCALTMLQKEGPRAFYKGFMPSFLRLGSWNVVMFVTYEQLKRALMAACTSREAPF.

Over 1–16 (MVGFKATDVPPTATVK) the chain is Mitochondrial intermembrane. 3 Solcar repeats span residues 11–106 (PTAT…VKQF), 114–203 (ASIG…IKDA), and 212–297 (DDLP…LKRA). The tract at residues 16–63 (KFLGAGTAACIADLITFPLDTAKVRLQIQGESQGPVRATASAQYRGVM) is important for interaction with long-chain fatty acids. A helical membrane pass occupies residues 17–40 (FLGAGTAACIADLITFPLDTAKVR). Residues 41–77 (LQIQGESQGPVRATASAQYRGVMGTILTMVRTEGPRS) lie on the Mitochondrial matrix side of the membrane. The chain crosses the membrane as a helical span at residues 78–103 (LYNGLVAGLQRQMSFASVRIGLYDSV). Residues 104 to 119 (KQFYTKGSEHASIGSR) are Mitochondrial intermembrane-facing. The helical transmembrane segment at 120–145 (LLAGSTTGALAVAVAQPTDVVKVRFQ) threads the bilayer. Residues 146 to 173 (AQARAGGGRRYQSTVNAYKTIAREEGFR) lie on the Mitochondrial matrix side of the membrane. Residues 174–199 (GLWKGTSPNVARNAIVNCAELVTYDL) traverse the membrane as a helical segment. Topologically, residues 200-217 (IKDALLKANLMTDDLPCH) are mitochondrial intermembrane. The helical transmembrane segment at 218–242 (FTSAFGAGFCTTVIASPVDVVKTRY) threads the bilayer. Residues 243-268 (MNSALGQYSSAGHCALTMLQKEGPRA) lie on the Mitochondrial matrix side of the membrane. Residues 269–294 (FYKGFMPSFLRLGSWNVVMFVTYEQL) form a helical membrane-spanning segment. An important for interaction with long-chain fatty acids region spans residues 278–285 (LRLGSWNV). Topologically, residues 295–309 (KRALMAACTSREAPF) are mitochondrial intermembrane.

Belongs to the mitochondrial carrier (TC 2.A.29) family. Homotetramer. Adopts an asymmetrical dimer of dimers functional form. In terms of tissue distribution, widely expressed in adult human tissues, including tissues rich in macrophages. Most expressed in white adipose tissue and skeletal muscle.

It is found in the mitochondrion inner membrane. The enzyme catalyses L-aspartate(out) + phosphate(in) + H(+)(in) = L-aspartate(in) + phosphate(out) + H(+)(out). The catalysed reaction is oxaloacetate(out) + phosphate(in) + H(+)(in) = oxaloacetate(in) + phosphate(out) + H(+)(out). It carries out the reaction (S)-malate(out) + phosphate(in) + H(+)(in) = (S)-malate(in) + phosphate(out) + H(+)(out). It catalyses the reaction malonate(out) + phosphate(in) + H(+)(in) = malonate(in) + phosphate(out) + H(+)(out). The enzyme catalyses sulfate(out) + phosphate(in) + H(+)(in) = sulfate(in) + phosphate(out) + H(+)(out). The catalysed reaction is (S)-malate(out) = (S)-malate(in). It carries out the reaction L-aspartate(out) = L-aspartate(in). It catalyses the reaction phosphate(in) = phosphate(out). The enzyme catalyses chloride(in) = chloride(out). The catalysed reaction is H(+)(in) = H(+)(out). It carries out the reaction a long-chain fatty acid(out) = a long-chain fatty acid(in). Inhibited by pyridoxal- 5'-phosphate, bathophenanthroline, tannic acid, bromocresol purple, butylmalonate and phenylsuccinate. Proton conductance is activated by cardiolipin and long-chain free fatty acids and inhibited by purine nucleotides ATP and ADP. Chloride ion transporter activity is inhibited by long-chain free fatty acids. Its function is as follows. Antiporter that exports dicarboxylate intermediates of the Krebs cycle in exchange for phosphate plus a proton across the inner membrane of mitochondria, a process driven by mitochondrial motive force with an overall impact on glycolysis, glutaminolysis and glutathione-dependent redox balance. Continuous export of oxaloacetate and related four-carbon dicarboxylates from mitochondrial matrix into the cytosol negatively regulates the oxidation of acetyl-CoA substrates via the Krebs cycle, lowering the ATP/ADP ratio and reactive oxygen species (ROS) production. May mediate inducible proton entry into the mitochondrial matrix affecting ATP turnover as a protection mechanism against oxidative stress. The proton currents are most likely associated with fatty acid flipping across the inner membrane of mitochondria in a metabolic process regulated by free fatty acids and purine nucleotides. Regulates the use of glucose as a source of energy. Required for glucose-induced DRP1-dependent mitochondrial fission and neuron activation in the ventromedial nucleus of the hypothalamus (VMH). This mitochondrial adaptation mechanism modulates the VMH pool of glucose-excited neurons with an impact on systemic glucose homeostasis. Regulates ROS levels and metabolic reprogramming of macrophages during the resolution phase of inflammation. Attenuates ROS production in response to IL33 to preserve the integrity of the Krebs cycle required for persistent production of itaconate and subsequent GATA3-dependent differentiation of inflammation-resolving alternatively activated macrophages. Can unidirectionally transport anions including L-malate, L-aspartate, phosphate and chloride ions. Does not mediate adaptive thermogenesis. This is Dicarboxylate carrier SLC25A8 (UCP2) from Homo sapiens (Human).